A 240-amino-acid polypeptide reads, in one-letter code: Sugar fermentation stimulation protein homolog (240 aa).

This sequence belongs to the SfsA family.

This chain is Sugar fermentation stimulation protein homolog, found in Pasteurella multocida (strain Pm70).